Consider the following 336-residue polypeptide: Anthranilate phosphoribosyltransferase (336 aa).

Residues Gly-82, Gly-85–Asp-86, Thr-90, Asn-92–Thr-95, Lys-110–Gly-118, and Ser-122 contribute to the 5-phospho-alpha-D-ribose 1-diphosphate site. Position 82 (Gly-82) interacts with anthranilate. A Mg(2+)-binding site is contributed by Ser-94. Asn-113 contributes to the anthranilate binding site. Arg-168 lines the anthranilate pocket. Mg(2+) contacts are provided by Asp-227 and Glu-228.

The protein belongs to the anthranilate phosphoribosyltransferase family. As to quaternary structure, homodimer. The cofactor is Mg(2+).

The enzyme catalyses N-(5-phospho-beta-D-ribosyl)anthranilate + diphosphate = 5-phospho-alpha-D-ribose 1-diphosphate + anthranilate. Its pathway is amino-acid biosynthesis; L-tryptophan biosynthesis; L-tryptophan from chorismate: step 2/5. Catalyzes the transfer of the phosphoribosyl group of 5-phosphorylribose-1-pyrophosphate (PRPP) to anthranilate to yield N-(5'-phosphoribosyl)-anthranilate (PRA). This is Anthranilate phosphoribosyltransferase from Desulfitobacterium hafniense (strain Y51).